A 268-amino-acid polypeptide reads, in one-letter code: 4-hydroxy-tetrahydrodipicolinate reductase (268 aa).

NAD(+) is bound at residue G8–M13. Position 36 (R36) interacts with NADP(+). NAD(+) contacts are provided by residues G99 to T101 and A123 to F126. The active-site Proton donor/acceptor is H156. Residue H157 coordinates (S)-2,3,4,5-tetrahydrodipicolinate. The active-site Proton donor is K160. G166–T167 is a binding site for (S)-2,3,4,5-tetrahydrodipicolinate.

Belongs to the DapB family.

It is found in the cytoplasm. The enzyme catalyses (S)-2,3,4,5-tetrahydrodipicolinate + NAD(+) + H2O = (2S,4S)-4-hydroxy-2,3,4,5-tetrahydrodipicolinate + NADH + H(+). It catalyses the reaction (S)-2,3,4,5-tetrahydrodipicolinate + NADP(+) + H2O = (2S,4S)-4-hydroxy-2,3,4,5-tetrahydrodipicolinate + NADPH + H(+). It functions in the pathway amino-acid biosynthesis; L-lysine biosynthesis via DAP pathway; (S)-tetrahydrodipicolinate from L-aspartate: step 4/4. Catalyzes the conversion of 4-hydroxy-tetrahydrodipicolinate (HTPA) to tetrahydrodipicolinate. The chain is 4-hydroxy-tetrahydrodipicolinate reductase from Pseudomonas fluorescens (strain Pf0-1).